The chain runs to 556 residues: Membrane protein insertase YidC (556 aa).

A helical transmembrane segment spans residues 5–25 (TLTAIVLSFVLLTAFQFYMAW). The tract at residues 36 to 74 (QVQSGESSAPAPLASTAPVADALPPPVEGMAGSAPQQAM) is disordered. A compositionally biased stretch (low complexity) spans 42 to 55 (SSAPAPLASTAPVA). A run of 4 helical transmembrane segments spans residues 370–390 (NYGVAIILLTLAIKLLFFPLA), 441–461 (LPILVQIPVFFALYKVLFLSV), 468–488 (FMLWIPDLSAMDPFYVLPLLM), and 510–530 (IMMFLPVIFTVMFLSFPSGLV).

The protein belongs to the OXA1/ALB3/YidC family. Type 1 subfamily. As to quaternary structure, interacts with the Sec translocase complex via SecD. Specifically interacts with transmembrane segments of nascent integral membrane proteins during membrane integration.

It localises to the cell inner membrane. Required for the insertion and/or proper folding and/or complex formation of integral membrane proteins into the membrane. Involved in integration of membrane proteins that insert both dependently and independently of the Sec translocase complex, as well as at least some lipoproteins. Aids folding of multispanning membrane proteins. The sequence is that of Membrane protein insertase YidC from Magnetococcus marinus (strain ATCC BAA-1437 / JCM 17883 / MC-1).